The following is a 27-amino-acid chain: Protamine-A (27 aa).

The segment at 1-27 (ARRRRRHASTKLKRRRRRRRHGKKSHK) is disordered.

As to expression, testis.

Its subcellular location is the nucleus. It is found in the chromosome. Functionally, protamines substitute for histones in the chromatin of sperm during the haploid phase of spermatogenesis. They compact sperm DNA into a highly condensed, stable and inactive complex. The chain is Protamine-A from Acipenser stellatus (Sevruga).